The following is a 452-amino-acid chain: UDP-N-acetylmuramoylalanine--D-glutamate ligase (452 aa).

An ATP-binding site is contributed by 115–121 (GTNGKTT).

Belongs to the MurCDEF family.

The protein resides in the cytoplasm. The enzyme catalyses UDP-N-acetyl-alpha-D-muramoyl-L-alanine + D-glutamate + ATP = UDP-N-acetyl-alpha-D-muramoyl-L-alanyl-D-glutamate + ADP + phosphate + H(+). Its pathway is cell wall biogenesis; peptidoglycan biosynthesis. Functionally, cell wall formation. Catalyzes the addition of glutamate to the nucleotide precursor UDP-N-acetylmuramoyl-L-alanine (UMA). The protein is UDP-N-acetylmuramoylalanine--D-glutamate ligase of Citrifermentans bemidjiense (strain ATCC BAA-1014 / DSM 16622 / JCM 12645 / Bem) (Geobacter bemidjiensis).